Reading from the N-terminus, the 62-residue chain is Photosystem II reaction center X protein (62 aa).

A helical transmembrane segment spans residues 26–46; that stretch reads IASFFAAALLIVIPAAAFLIF.

Belongs to the PsbX family. Type 2 subfamily. PSII consists of a core antenna complex that captures photons, and an electron transfer chain that converts photonic excitation into a charge separation. PSII forms dimeric complexes.

The protein resides in the cellular thylakoid membrane. In terms of biological role, involved in the binding and/or turnover of quinones at the Q(B) site of Photosystem II. The protein is Photosystem II reaction center X protein of Prochlorococcus marinus subsp. pastoris (strain CCMP1986 / NIES-2087 / MED4).